A 382-amino-acid polypeptide reads, in one-letter code: Mating-type protein a-1 (382 aa).

Residues 116–184 (IPRPPNAYIL…RLLLENPDYR (69 aa)) constitute a DNA-binding region (HMG box).

As to quaternary structure, binds in vitro to DNA containing a specific core sequence 5'-CTTTG-3'.

It is found in the nucleus. Functionally, mating type proteins are sequence specific DNA-binding proteins that act as master switches in yeast differentiation by controlling gene expression in a cell type-specific fashion. Transcriptional activator that induces the transcription of a-specific genes like mating factor mfa-1. Required for mating as an a-cell, blocking of heterokaryon formation (vegetative incompatibility) and for perithecium induction. This Neurospora crassa protein is Mating-type protein a-1 (mta-1).